A 318-amino-acid chain; its full sequence is NADH-ubiquinone oxidoreductase chain 1 (318 aa).

8 helical membrane-spanning segments follow: residues 2–22, 69–89, 102–122, 146–166, 171–191, 231–251, 253–273, and 294–314; these read FMIN…FLTL, FMFT…WVPL, MLFI…SGWA, LAII…STLT, HLWL…STLA, IIMM…NPLL, EAHT…FLWV, and LPLT…LACI.

It belongs to the complex I subunit 1 family. As to quaternary structure, core subunit of respiratory chain NADH dehydrogenase (Complex I) which is composed of 45 different subunits.

The protein localises to the mitochondrion inner membrane. The catalysed reaction is a ubiquinone + NADH + 5 H(+)(in) = a ubiquinol + NAD(+) + 4 H(+)(out). Its function is as follows. Core subunit of the mitochondrial membrane respiratory chain NADH dehydrogenase (Complex I) which catalyzes electron transfer from NADH through the respiratory chain, using ubiquinone as an electron acceptor. Essential for the catalytic activity and assembly of complex I. This Dugong dugon (Dugong) protein is NADH-ubiquinone oxidoreductase chain 1 (MT-ND1).